Consider the following 156-residue polypeptide: ATP synthase subunit b (156 aa).

Residues I3 to T23 traverse the membrane as a helical segment.

It belongs to the ATPase B chain family. F-type ATPases have 2 components, F(1) - the catalytic core - and F(0) - the membrane proton channel. F(1) has five subunits: alpha(3), beta(3), gamma(1), delta(1), epsilon(1). F(0) has three main subunits: a(1), b(2) and c(10-14). The alpha and beta chains form an alternating ring which encloses part of the gamma chain. F(1) is attached to F(0) by a central stalk formed by the gamma and epsilon chains, while a peripheral stalk is formed by the delta and b chains.

The protein localises to the cell inner membrane. In terms of biological role, f(1)F(0) ATP synthase produces ATP from ADP in the presence of a proton or sodium gradient. F-type ATPases consist of two structural domains, F(1) containing the extramembraneous catalytic core and F(0) containing the membrane proton channel, linked together by a central stalk and a peripheral stalk. During catalysis, ATP synthesis in the catalytic domain of F(1) is coupled via a rotary mechanism of the central stalk subunits to proton translocation. Component of the F(0) channel, it forms part of the peripheral stalk, linking F(1) to F(0). This is ATP synthase subunit b from Xylella fastidiosa (strain M23).